The following is a 310-amino-acid chain: Porphobilinogen deaminase (310 aa).

Position 242 is an S-(dipyrrolylmethanemethyl)cysteine (Cys-242).

The protein belongs to the HMBS family. As to quaternary structure, monomer. The cofactor is dipyrromethane.

The enzyme catalyses 4 porphobilinogen + H2O = hydroxymethylbilane + 4 NH4(+). It participates in porphyrin-containing compound metabolism; protoporphyrin-IX biosynthesis; coproporphyrinogen-III from 5-aminolevulinate: step 2/4. In terms of biological role, tetrapolymerization of the monopyrrole PBG into the hydroxymethylbilane pre-uroporphyrinogen in several discrete steps. In Shewanella halifaxensis (strain HAW-EB4), this protein is Porphobilinogen deaminase.